The following is a 165-amino-acid chain: Nicotinamide-nucleotide amidohydrolase PncC (165 aa).

Belongs to the CinA family. PncC subfamily. As to quaternary structure, homodimer.

The enzyme catalyses beta-nicotinamide D-ribonucleotide + H2O = nicotinate beta-D-ribonucleotide + NH4(+). Has NMN aminohydrolase activity, not active on other substrates. This is Nicotinamide-nucleotide amidohydrolase PncC (pncC) from Shigella flexneri.